Here is a 297-residue protein sequence, read N- to C-terminus: tRNA pseudouridine synthase B (297 aa).

Asp44 serves as the catalytic Nucleophile.

It belongs to the pseudouridine synthase TruB family. Type 1 subfamily.

The enzyme catalyses uridine(55) in tRNA = pseudouridine(55) in tRNA. In terms of biological role, responsible for synthesis of pseudouridine from uracil-55 in the psi GC loop of transfer RNAs. The sequence is that of tRNA pseudouridine synthase B from Mycobacterium sp. (strain JLS).